We begin with the raw amino-acid sequence, 1237 residues long: Clustered mitochondria protein homolog (1237 aa).

The Clu domain maps to 291 to 535; that stretch reads DITRSQENCL…RITPLDVAWS (245 aa). Composition is skewed to basic and acidic residues over residues 575-597 and 845-854; these read RKTA…DKAE and SQIKSQEHSP. 2 disordered regions span residues 575 to 614 and 845 to 886; these read RKTA…AVAS and SQIK…VAAS. 3 TPR repeats span residues 957 to 990, 999 to 1032, and 1041 to 1074; these read AKLY…TERT, ILSY…WKII, and ITTM…CEGL. Disordered regions lie at residues 1152 to 1189 and 1201 to 1237; these read RLRR…KSIG and FIEG…VQTA. Polar residues predominate over residues 1156 to 1187; sequence TNLSPRMTIGTKPQPQVGQNAPATTNGATSKS.

Belongs to the CLU family. As to quaternary structure, may associate with the eukaryotic translation initiation factor 3 (eIF-3) complex.

The protein resides in the cytoplasm. In terms of biological role, mRNA-binding protein involved in proper cytoplasmic distribution of mitochondria. This is Clustered mitochondria protein homolog from Ajellomyces capsulatus (strain NAm1 / WU24) (Darling's disease fungus).